The chain runs to 135 residues: Small ribosomal subunit protein uS12 (135 aa).

D89 carries the post-translational modification 3-methylthioaspartic acid. Residues N108 to K135 form a disordered region. Basic residues predominate over residues T111–A122. Residues K123–K135 show a composition bias toward basic and acidic residues.

This sequence belongs to the universal ribosomal protein uS12 family. As to quaternary structure, part of the 30S ribosomal subunit. Contacts proteins S8 and S17. May interact with IF1 in the 30S initiation complex.

With S4 and S5 plays an important role in translational accuracy. Its function is as follows. Interacts with and stabilizes bases of the 16S rRNA that are involved in tRNA selection in the A site and with the mRNA backbone. Located at the interface of the 30S and 50S subunits, it traverses the body of the 30S subunit contacting proteins on the other side and probably holding the rRNA structure together. The combined cluster of proteins S8, S12 and S17 appears to hold together the shoulder and platform of the 30S subunit. The chain is Small ribosomal subunit protein uS12 from Helicobacter pylori (strain HPAG1).